Consider the following 297-residue polypeptide: NAC domain-containing protein 72 (297 aa).

The 149-residue stretch at 14–162 folds into the NAC domain; sequence LPPGFRFYPT…DWVLCRIYKK (149 aa). A DNA-binding region spans residues 111–168; it reads VGIKKALVFYAGKAPKGTKTNWIMHEYRLIEHSRSHGSSKLDDWVLCRIYKKTSGSQR. 2 disordered regions span residues 168–195 and 259–278; these read RQAV…SQLD and GEAE…LTQS. Positions 266-277 are enriched in polar residues; that stretch reads VNRQQNSSGLTQ.

In terms of tissue distribution, expressed in leaves and in root pericycle and epidermis.

It is found in the nucleus. Functionally, transcription factors that bind specifically to the 5'-CATGTG-3' motif and with bipartite regions with 5'-CGTr-3' and 5'-YACG-3' as cores. Involved in the regulation of metabolic reprogramming during senescence by promoting the chloroplast protein degradation and the catabolism of lysine, phytol and free fatty acids via the induction of CV, LKR/SDH and PES1 expression. Also triggers the degradation of starch and the accumulation of mono- and disaccharides during senescence by enhancing the expression of AMY1, SFP1 and SWEET15. The chain is NAC domain-containing protein 72 from Arabidopsis thaliana (Mouse-ear cress).